The following is a 79-amino-acid chain: Small ribosomal subunit protein bS18 (79 aa).

It belongs to the bacterial ribosomal protein bS18 family. Part of the 30S ribosomal subunit. Forms a tight heterodimer with protein bS6.

In terms of biological role, binds as a heterodimer with protein bS6 to the central domain of the 16S rRNA, where it helps stabilize the platform of the 30S subunit. The chain is Small ribosomal subunit protein bS18 from Blochmanniella pennsylvanica (strain BPEN).